A 497-amino-acid polypeptide reads, in one-letter code: 5'-AMP-activated protein kinase subunit gamma-3 (497 aa).

The interval 16–143 (STQTPSWSSF…SSSSTDDLDQ (128 aa)) is disordered. A compositionally biased stretch (polar residues) spans 39–54 (GDSTSWPSPAMTTSAE). Basic and acidic residues predominate over residues 68–79 (KSQEDVEERELP). 3 consecutive CBS domains span residues 204–265 (MATS…RSPL), 287–345 (CFKP…QRTL), and 363–423 (TFRD…HLDI). ADP contacts are provided by residues Arg-232, 247 to 252 (MLTITD), Val-292, 313 to 314 (HR), and Lys-332. AMP contacts are provided by residues Arg-232, 247–252 (MLTITD), Val-292, His-313, 313–314 (HR), Lys-332, Thr-363, Ala-368, 389–390 (SA), 405–408 (SRFD), Arg-432, Leu-440, His-461, 461–462 (HR), and 477–480 (SLSD). ATP-binding positions include Arg-232, 247–252 (MLTITD), Val-292, 313–314 (HR), Arg-314, and Lys-332. The AMPK pseudosubstrate motif lies at 300-321 (LFEAVYTLIKNRIHRLPVLDPV). ADP is bound by residues 405 to 408 (SRFD), Arg-432, Leu-440, and 461 to 462 (HR). ATP-binding positions include 405-408 (SRFD), Arg-432, Leu-440, and 461-462 (HR). Residues 435-494 (CLEGVLSCQPHETLGEVIDRIAREQVHRLVLVDETQHLLGVVSLSDILQALVLSPAGIDA) enclose the CBS 4 domain.

This sequence belongs to the 5'-AMP-activated protein kinase gamma subunit family. As to quaternary structure, AMPK is a heterotrimer of an alpha catalytic subunit (PRKAA1 or PRKAA2), a beta (PRKAB1 or PRKAB2) and a gamma non-catalytic subunits (PRKAG1, PRKAG2 or PRKAG3). Interacts with FNIP1 and FNIP2. Phosphorylated by ULK1; leading to negatively regulate AMPK activity and suggesting the existence of a regulatory feedback loop between ULK1 and AMPK. In terms of processing, glycosylated; O-GlcNAcylated by OGT, promoting the AMP-activated protein kinase (AMPK) activity.

In terms of biological role, AMP/ATP-binding subunit of AMP-activated protein kinase (AMPK), an energy sensor protein kinase that plays a key role in regulating cellular energy metabolism. In response to reduction of intracellular ATP levels, AMPK activates energy-producing pathways and inhibits energy-consuming processes: inhibits protein, carbohydrate and lipid biosynthesis, as well as cell growth and proliferation. AMPK acts via direct phosphorylation of metabolic enzymes, and by longer-term effects via phosphorylation of transcription regulators. AMPK also acts as a regulator of cellular polarity by remodeling the actin cytoskeleton; probably by indirectly activating myosin. The AMPK gamma3 subunit is a non-catalytic subunit with a regulatory role in muscle energy metabolism. It mediates binding to AMP, ADP and ATP, leading to AMPK activation or inhibition: AMP-binding results in allosteric activation of alpha catalytic subunit (PRKAA1 or PRKAA2) both by inducing phosphorylation and preventing dephosphorylation of catalytic subunits. ADP also stimulates phosphorylation, without stimulating already phosphorylated catalytic subunit. ATP promotes dephosphorylation of catalytic subunit, rendering the AMPK enzyme inactive. This chain is 5'-AMP-activated protein kinase subunit gamma-3 (PRKAG3), found in Bos taurus (Bovine).